The sequence spans 123 residues: TYMS opposite strand protein (123 aa).

Residues 57 to 111 (MRPLPRRIEVRTKRGPQRPAAPERSPQPRLPPSRHPSRRGPRRHLSGCSAPACRI) are disordered. The segment covering 91–101 (HPSRRGPRRHL) has biased composition (basic residues).

The polypeptide is TYMS opposite strand protein (TYMSOS) (Homo sapiens (Human)).